The following is a 194-amino-acid chain: Ras-related protein Rab-22A (194 aa).

Position 12-20 (12-20 (GDTGVGKSS)) interacts with GTP. The Effector region signature appears at 34 to 42 (INPTIGASF). Residues 60-64 (DTAGQ), 118-121 (NKCD), and 148-150 (SAK) contribute to the GTP site. A disordered region spans residues 170 to 194 (DANPPSGGKGFKLRRQPSEPQRSCC). Residues cysteine 193 and cysteine 194 are each lipidated (S-geranylgeranyl cysteine).

Belongs to the small GTPase superfamily. Rab family. Interacts directly with ZFYVE20. Interacts (in its GTP-bound form) with RINL and RABGEF1. Binds EEA1.

It localises to the endosome membrane. It is found in the cell membrane. Its subcellular location is the early endosome. The protein resides in the late endosome. The protein localises to the cell projection. It localises to the ruffle. It is found in the cytoplasmic vesicle. Its subcellular location is the phagosome. The protein resides in the phagosome membrane. Its function is as follows. Plays a role in endocytosis and intracellular protein transport. Mediates trafficking of TF from early endosomes to recycling endosomes. Required for NGF-mediated endocytosis of NTRK1, and subsequent neurite outgrowth. Binds GTP and GDP and has low GTPase activity. Alternates between a GTP-bound active form and a GDP-bound inactive form. The polypeptide is Ras-related protein Rab-22A (RAB22A) (Canis lupus familiaris (Dog)).